The following is a 308-amino-acid chain: HTH-type transcriptional activator AllS (308 aa).

Positions 2–59 constitute an HTH lysR-type domain; sequence FDPETLRTFISVAETGSFSKAAERLCKTTATTSYRIKLLEENTGVGLFFRTTRSVSLT. A DNA-binding region (H-T-H motif) is located at residues 19-38; it reads FSKAAERLCKTTATTSYRIK.

The protein belongs to the LysR transcriptional regulatory family.

Functionally, positive regulator essential for the expression of allD operon. Binds to the allD promoter. This Salmonella typhi protein is HTH-type transcriptional activator AllS (allS).